The sequence spans 514 residues: 2-isopropylmalate synthase (514 aa).

Residues 5 to 267 (IYIFDTTLRD…HTDIVTEEIT (263 aa)) form the Pyruvate carboxyltransferase domain. Aspartate 14, histidine 202, histidine 204, and asparagine 238 together coordinate Mn(2+). Residues 392-514 (KLKYYQVFTG…SKDLQKISAN (123 aa)) form a regulatory domain region.

Belongs to the alpha-IPM synthase/homocitrate synthase family. LeuA type 1 subfamily. Homodimer. Requires Mn(2+) as cofactor.

It is found in the cytoplasm. It catalyses the reaction 3-methyl-2-oxobutanoate + acetyl-CoA + H2O = (2S)-2-isopropylmalate + CoA + H(+). It functions in the pathway amino-acid biosynthesis; L-leucine biosynthesis; L-leucine from 3-methyl-2-oxobutanoate: step 1/4. Catalyzes the condensation of the acetyl group of acetyl-CoA with 3-methyl-2-oxobutanoate (2-ketoisovalerate) to form 3-carboxy-3-hydroxy-4-methylpentanoate (2-isopropylmalate). The chain is 2-isopropylmalate synthase from Clostridium kluyveri (strain NBRC 12016).